We begin with the raw amino-acid sequence, 354 residues long: MRIDHIRQRLRASGAKPCHEQRVLRAWTHALPLDRGRCRSEDFFPAPLGARLPALGAELAALAQVRSEHAGEDGARLLVELADGQTVESVLLPRDGLCVSTQVGCAVGCAFCMTGRDGLLRQLGSAEIVAQVVLARSRRAVRKVVFMGMGEPAHNLDNVLEAIALLGTEGGIGHKNLVFSTVGDRRVFERLPQGSVKPALALSLHTTRPALRTKLMPRAPRLDPAELVELGETYARATGYPIQYQWTLLAGVNDDDEELDGIVRLLAGKYAVMNFIPYNSVAGAGFARPSWEHAAAMARYLHRRGILTKLRHSAGQDVDGGCGQLRARVIASGALGQPAEAAPDRVVLVRRGQA.

E88 functions as the Proton acceptor in the catalytic mechanism. In terms of domain architecture, Radical SAM core spans 91-317; that stretch reads LLPRDGLCVS…TKLRHSAGQD (227 aa). A disulfide bridge connects residues C98 and C322. Residues C105, C109, and C112 each contribute to the [4Fe-4S] cluster site. Residues 150 to 151, S180, 203 to 205, and N279 contribute to the S-adenosyl-L-methionine site; these read GE and SLH. The active-site S-methylcysteine intermediate is the C322.

This sequence belongs to the radical SAM superfamily. RlmN family. The cofactor is [4Fe-4S] cluster.

The protein resides in the cytoplasm. In Aromatoleum aromaticum (strain DSM 19018 / LMG 30748 / EbN1) (Azoarcus sp. (strain EbN1)), this protein is Probable RNA methyltransferase AZOSEA28700.